A 1210-amino-acid polypeptide reads, in one-letter code: Homeodomain-interacting protein kinase 1 (1210 aa).

Lys-25 participates in a covalent cross-link: Glycyl lysine isopeptide (Lys-Gly) (interchain with G-Cter in SUMO); alternate. Lys-25 is covalently cross-linked (Glycyl lysine isopeptide (Lys-Gly) (interchain with G-Cter in SUMO2); alternate). Residues Lys-120 and Lys-124 each participate in a glycyl lysine isopeptide (Lys-Gly) (interchain with G-Cter in SUMO2) cross-link. One can recognise a Protein kinase domain in the interval 190–518 (YEVLEFLGRG…PLKTLNHQFV (329 aa)). ATP-binding positions include 196-204 (LGRGTFGQV) and Lys-219. The Proton acceptor role is filled by Asp-315. Residues 835-856 (QQQSSSLPSKKNKQSAPVSSKS) form a disordered region. The short motif at 844–847 (KKNK) is the Nuclear localization signal 1 (NLS1) element. A Phosphoserine modification is found at Ser-872. Residues 885–1093 (PVQDQHQPII…FQHGSPLHST (209 aa)) are interaction with TP53. Residues 891-998 (QPIIIPDTPS…PLKTQLGDCT (108 aa)) are required for localization to nuclear speckles. The SUMO interaction motifs (SIM); required for nuclear localization and kinase activity stretch occupies residues 902 to 926 (PVSVITIRSDTDEEEDNKYKPNSSS). The interval 938–981 (TVNDSPDSDSSLSSPHPTDTLSALRGNSGTLLEGPGRPAADGIG) is disordered. Positions 941 to 959 (DSPDSDSSLSSPHPTDTLS) are enriched in low complexity. Lys-991 participates in a covalent cross-link: Glycyl lysine isopeptide (Lys-Gly) (interchain with G-Cter in SUMO2). 2 disordered regions span residues 1046–1069 (LSQNQQSSSASTSQERSSNPAPRR) and 1084–1104 (FQHGSPLHSTGHPHLAPAPAH). Composition is skewed to low complexity over residues 1047 to 1063 (SQNQQSSSASTSQERSS) and 1095 to 1104 (HPHLAPAPAH). Ser-1200 is subject to Phosphoserine. A Glycyl lysine isopeptide (Lys-Gly) (interchain with G-Cter in SUMO) cross-link involves residue Lys-1203.

The protein belongs to the protein kinase superfamily. CMGC Ser/Thr protein kinase family. HIPK subfamily. In terms of assembly, interacts with Nkx1-2, Nkx2-5, MYB, PARK7, DAXX and p53/TP53. Part of a cytoplasmic complex made of HIPK1, DAB2IP and MAP3K5 in response to TNF. This complex formation promotes MAP3K5-JNK activation and subsequent apoptosis. Phosphorylated and activated by JNK1. Autophosphorylated. Post-translationally, sumoylated. When conjugated it is directed to nuclear speckles. SENP1-mediated desumoylation is mediated by TNF in response to stress stimuli, triggering transient translocation from nucleus to cytoplasm. Ubiquitously expressed, with high levels in reproductive tissues. Expressed in the epithelial layer of mammary gland, uterus and epididymis, in the corpus luteum, and in post-meiotic round spermatids.

Its subcellular location is the nucleus. It is found in the cytoplasm. The protein localises to the nucleus speckle. It catalyses the reaction L-seryl-[protein] + ATP = O-phospho-L-seryl-[protein] + ADP + H(+). The enzyme catalyses L-threonyl-[protein] + ATP = O-phospho-L-threonyl-[protein] + ADP + H(+). Its function is as follows. Serine/threonine-protein kinase involved in transcription regulation and TNF-mediated cellular apoptosis. Plays a role as a corepressor for homeodomain transcription factors. Phosphorylates DAXX and MYB. Phosphorylates DAXX in response to stress, and mediates its translocation from the nucleus to the cytoplasm. Inactivates MYB transcription factor activity by phosphorylation. Prevents MAP3K5-JNK activation in the absence of TNF. TNF triggers its translocation to the cytoplasm in response to stress stimuli, thus activating nuclear MAP3K5-JNK by derepression and promoting apoptosis. May be involved in anti-oxidative stress responses. Involved in the regulation of eye size, lens formation and retinal lamination during late embryogenesis. Promotes angiogenesis and to be involved in erythroid differentiation. May be involved in malignant squamous cell tumor formation. Phosphorylates PAGE4 at 'Thr-51' which is critical for the ability of PAGE4 to potentiate the transcriptional activator activity of JUN. This Mus musculus (Mouse) protein is Homeodomain-interacting protein kinase 1 (Hipk1).